We begin with the raw amino-acid sequence, 295 residues long: UDP-3-O-acyl-N-acetylglucosamine deacetylase (295 aa).

The Zn(2+) site is built by H75, H232, and D236. Residue H259 is the Proton donor of the active site.

It belongs to the LpxC family. It depends on Zn(2+) as a cofactor.

The enzyme catalyses a UDP-3-O-[(3R)-3-hydroxyacyl]-N-acetyl-alpha-D-glucosamine + H2O = a UDP-3-O-[(3R)-3-hydroxyacyl]-alpha-D-glucosamine + acetate. Its pathway is glycolipid biosynthesis; lipid IV(A) biosynthesis; lipid IV(A) from (3R)-3-hydroxytetradecanoyl-[acyl-carrier-protein] and UDP-N-acetyl-alpha-D-glucosamine: step 2/6. Functionally, catalyzes the hydrolysis of UDP-3-O-myristoyl-N-acetylglucosamine to form UDP-3-O-myristoylglucosamine and acetate, the committed step in lipid A biosynthesis. The polypeptide is UDP-3-O-acyl-N-acetylglucosamine deacetylase (Helicobacter pylori (strain J99 / ATCC 700824) (Campylobacter pylori J99)).